The chain runs to 66 residues: Large ribosomal subunit protein uL29 (66 aa).

It belongs to the universal ribosomal protein uL29 family.

The protein is Large ribosomal subunit protein uL29 of Francisella tularensis subsp. holarctica (strain LVS).